Reading from the N-terminus, the 332-residue chain is DNA-directed RNA polymerase subunit alpha (332 aa).

The tract at residues 1–234 is alpha N-terminal domain (alpha-NTD); that stretch reads MTVTANQVLR…DQLSVFGDFT (234 aa). The tract at residues 248–332 is alpha C-terminal domain (alpha-CTD); that stretch reads VDPVLLRPID…AGVASHGMLG (85 aa).

It belongs to the RNA polymerase alpha chain family. Homodimer. The RNAP catalytic core consists of 2 alpha, 1 beta, 1 beta' and 1 omega subunit. When a sigma factor is associated with the core the holoenzyme is formed, which can initiate transcription.

It carries out the reaction RNA(n) + a ribonucleoside 5'-triphosphate = RNA(n+1) + diphosphate. In terms of biological role, DNA-dependent RNA polymerase catalyzes the transcription of DNA into RNA using the four ribonucleoside triphosphates as substrates. This Stenotrophomonas maltophilia (strain K279a) protein is DNA-directed RNA polymerase subunit alpha.